The following is a 670-amino-acid chain: DNA ligase (670 aa).

Residues 32–36 (DAEYD), 81–82 (SL), and Glu113 each bind NAD(+). The active-site N6-AMP-lysine intermediate is the Lys115. NAD(+)-binding residues include Arg136, Glu173, Lys290, and Lys314. Residues Cys408, Cys411, Cys426, and Cys432 each contribute to the Zn(2+) site. The BRCT domain occupies 592-670 (ESDSPFAGKT…EAEMIRLLGE (79 aa)).

It belongs to the NAD-dependent DNA ligase family. LigA subfamily. Mg(2+) serves as cofactor. Requires Mn(2+) as cofactor.

The enzyme catalyses NAD(+) + (deoxyribonucleotide)n-3'-hydroxyl + 5'-phospho-(deoxyribonucleotide)m = (deoxyribonucleotide)n+m + AMP + beta-nicotinamide D-nucleotide.. Its function is as follows. DNA ligase that catalyzes the formation of phosphodiester linkages between 5'-phosphoryl and 3'-hydroxyl groups in double-stranded DNA using NAD as a coenzyme and as the energy source for the reaction. It is essential for DNA replication and repair of damaged DNA. In Yersinia pestis bv. Antiqua (strain Antiqua), this protein is DNA ligase.